Here is a 24-residue protein sequence, read N- to C-terminus: Iron-regulated 31 kDa protein (24 aa).

Its subcellular location is the periplasm. In terms of biological role, may be involved in iron uptake. This is Iron-regulated 31 kDa protein from Haemophilus influenzae.